Consider the following 135-residue polypeptide: Large ribosomal subunit protein uL16c (135 aa).

This sequence belongs to the universal ribosomal protein uL16 family. Part of the 50S ribosomal subunit.

It is found in the plastid. Its subcellular location is the chloroplast. The polypeptide is Large ribosomal subunit protein uL16c (Populus alba (White poplar)).